The primary structure comprises 123 residues: MSWIEPIISHFCQDLGVPTSSPLSPLIQLEMAQSGTLQLEQHGATLTLWLARSLAWHQCEDAMVKALTLTAAQKSGALPLRAGWLGENQLVLFVSLDERSLTLPLLHQAFEQLLRLQQEVLAP.

As to quaternary structure, interacts with YscB to form a complex which specifically binds to YopN.

The protein localises to the cytoplasm. The protein resides in the cell inner membrane. Its function is as follows. Functions as a specific chaperone for YopN. It could facilitate the secretion and the subsequent translocation of YopN. The polypeptide is Chaperone protein SycN (sycN) (Yersinia enterocolitica).